Here is a 140-residue protein sequence, read N- to C-terminus: ATP synthase epsilon chain (140 aa).

This sequence belongs to the ATPase epsilon chain family. F-type ATPases have 2 components, CF(1) - the catalytic core - and CF(0) - the membrane proton channel. CF(1) has five subunits: alpha(3), beta(3), gamma(1), delta(1), epsilon(1). CF(0) has three main subunits: a, b and c.

The protein resides in the cell membrane. Produces ATP from ADP in the presence of a proton gradient across the membrane. This Enterococcus hirae (strain ATCC 9790 / DSM 20160 / JCM 8729 / LMG 6399 / NBRC 3181 / NCIMB 6459 / NCDO 1258 / NCTC 12367 / WDCM 00089 / R) protein is ATP synthase epsilon chain (atpC).